Reading from the N-terminus, the 348-residue chain is Phenylalanine--tRNA ligase alpha subunit (348 aa).

Glu-262 contacts Mg(2+).

This sequence belongs to the class-II aminoacyl-tRNA synthetase family. Phe-tRNA synthetase alpha subunit type 1 subfamily. Tetramer of two alpha and two beta subunits. It depends on Mg(2+) as a cofactor.

It is found in the cytoplasm. It catalyses the reaction tRNA(Phe) + L-phenylalanine + ATP = L-phenylalanyl-tRNA(Phe) + AMP + diphosphate + H(+). The protein is Phenylalanine--tRNA ligase alpha subunit of Streptococcus pneumoniae (strain 70585).